The sequence spans 489 residues: Protein SOF1 (489 aa).

WD repeat units follow at residues 65–105 (GHRD…EFVS), 113–158 (VTGL…YSNK), 177–214 (DGES…PVSD), 217–257 (WGAD…PTQK), 259–299 (VQTM…RSLN), 303–342 (DHVS…SREI), and 346–385 (KRMQ…RSNV). Basic and acidic residues-rich tracts occupy residues 440 to 459 (REAN…ERKK) and 466 to 489 (HKYE…TQEK). The tract at residues 440–489 (REANERRTRKDMPYISERKKQIVGTVHKYEDSGRDRKRRKEDDKRDTQEK) is disordered.

This sequence belongs to the WD repeat DCAF13/WDSOF1 family. In terms of assembly, interacts with snoRNA U3. Interacts with NOP1 and MPP10. Component of the ribosomal small subunit (SSU) processome composed of at least 40 protein subunits and snoRNA U3.

Its subcellular location is the nucleus. The protein localises to the nucleolus. In terms of biological role, required for ribosomal RNA processing. This is Protein SOF1 (SOF1) from Saccharomyces cerevisiae (strain ATCC 204508 / S288c) (Baker's yeast).